We begin with the raw amino-acid sequence, 312 residues long: Olfactory receptor 4K17 (312 aa).

Over 1–25 (MKLLNQSQVSEFILLGLTSSQDVEF) the chain is Extracellular. N-linked (GlcNAc...) asparagine glycosylation occurs at N5. The chain crosses the membrane as a helical span at residues 26–49 (LLFALFSVIYVVTVLGNLLIIVTV). Topologically, residues 50-57 (FNTPNLNT) are cytoplasmic. The chain crosses the membrane as a helical span at residues 58-79 (PMYFLLGNLSFVDMTLASFATP). Residues 80–100 (KVILNLLKKQKVISFAGCFTQ) lie on the Extracellular side of the membrane. C97 and C189 form a disulfide bridge. The helical transmembrane segment at 101-120 (IFLLHLLGGVEMVLLVSMAF) threads the bilayer. Topologically, residues 121 to 139 (DRYVAICKPLHYMTIMNKK) are cytoplasmic. Residues 140–158 (VCVLLVVTSWLLGLLHSGF) traverse the membrane as a helical segment. The Extracellular portion of the chain corresponds to 159-195 (QIPFAVNLPFCGPNVVDSIFCDLPLVTKLACIDIYFV). The chain crosses the membrane as a helical span at residues 196-219 (QVVIVANSGIISLSCFIILLISYS). At 220-235 (LILITIKNHSPTGQSK) the chain is on the cytoplasmic side. Residues 236–258 (ARSTLTAHITVVILFFGPCIFIY) traverse the membrane as a helical segment. The Extracellular segment spans residues 259 to 269 (IWPFGNHSVDK). N-linked (GlcNAc...) asparagine glycosylation is present at N264. Residues 270–289 (FLAVFYTIITPILNPIIYTL) traverse the membrane as a helical segment. At 290–312 (RNKEMKISMKKLWRAFVNSREDT) the chain is on the cytoplasmic side.

Belongs to the G-protein coupled receptor 1 family.

It is found in the cell membrane. In terms of biological role, odorant receptor. This is Olfactory receptor 4K17 (OR4K17) from Homo sapiens (Human).